Here is a 215-residue protein sequence, read N- to C-terminus: Proteasome subunit beta (215 aa).

The propeptide at 1 to 12 (MLGEIQDKVYKG) is removed in mature form; by autocatalysis. Catalysis depends on threonine 13, which acts as the Nucleophile.

This sequence belongs to the peptidase T1B family. The 20S proteasome core is composed of 14 alpha and 14 beta subunits that assemble into four stacked heptameric rings, resulting in a barrel-shaped structure. The two inner rings, each composed of seven catalytic beta subunits, are sandwiched by two outer rings, each composed of seven alpha subunits. The catalytic chamber with the active sites is on the inside of the barrel. Has a gated structure, the ends of the cylinder being occluded by the N-termini of the alpha-subunits. Is capped at one or both ends by the proteasome regulatory ATPase, PAN.

It is found in the cytoplasm. The catalysed reaction is Cleavage of peptide bonds with very broad specificity.. With respect to regulation, the formation of the proteasomal ATPase PAN-20S proteasome complex, via the docking of the C-termini of PAN into the intersubunit pockets in the alpha-rings, triggers opening of the gate for substrate entry. Interconversion between the open-gate and close-gate conformations leads to a dynamic regulation of the 20S proteasome proteolysis activity. In terms of biological role, component of the proteasome core, a large protease complex with broad specificity involved in protein degradation. The polypeptide is Proteasome subunit beta (Archaeoglobus profundus (strain DSM 5631 / JCM 9629 / NBRC 100127 / Av18)).